The chain runs to 205 residues: Proteasome subunit beta type-3 (205 aa).

Phosphoserine is present on serine 31. A Glycyl lysine isopeptide (Lys-Gly) (interchain with G-Cter in ubiquitin) cross-link involves residue lysine 70.

It belongs to the peptidase T1B family. The 26S proteasome consists of a 20S proteasome core and two 19S regulatory subunits. The 20S proteasome core is composed of 28 subunits that are arranged in four stacked rings, resulting in a barrel-shaped structure. The two end rings are each formed by seven alpha subunits, and the two central rings are each formed by seven beta subunits. The catalytic chamber with the active sites is on the inside of the barrel.

The protein resides in the cytoplasm. The protein localises to the nucleus. Its function is as follows. Non-catalytic component of the proteasome which degrades poly-ubiquitinated proteins in the cytoplasm and in the nucleus. It is essential for the regulated turnover of proteins and for the removal of misfolded proteins. The proteasome is a multicatalytic proteinase complex that is characterized by its ability to cleave peptides with Arg, Phe, Tyr, Leu, and Glu adjacent to the leaving group at neutral or slightly basic pH. It has an ATP-dependent proteolytic activity. This subunit may participate in the trypsin-like activity of the enzyme complex. In Saccharomyces cerevisiae (strain ATCC 204508 / S288c) (Baker's yeast), this protein is Proteasome subunit beta type-3 (PUP3).